The primary structure comprises 679 residues: DNA ligase (679 aa).

NAD(+)-binding positions include 36–40, 85–86, and Glu116; these read DAQYD and SL. The N6-AMP-lysine intermediate role is filled by Lys118. NAD(+)-binding residues include Arg139, Glu174, Lys300, and Lys324. Cys418, Cys421, Cys436, and Cys441 together coordinate Zn(2+). The BRCT domain occupies 600–679; sequence EGGGPLNGKV…NEFRELTGRK (80 aa).

Belongs to the NAD-dependent DNA ligase family. LigA subfamily. Mg(2+) serves as cofactor. It depends on Mn(2+) as a cofactor.

The enzyme catalyses NAD(+) + (deoxyribonucleotide)n-3'-hydroxyl + 5'-phospho-(deoxyribonucleotide)m = (deoxyribonucleotide)n+m + AMP + beta-nicotinamide D-nucleotide.. DNA ligase that catalyzes the formation of phosphodiester linkages between 5'-phosphoryl and 3'-hydroxyl groups in double-stranded DNA using NAD as a coenzyme and as the energy source for the reaction. It is essential for DNA replication and repair of damaged DNA. In Pelotomaculum thermopropionicum (strain DSM 13744 / JCM 10971 / SI), this protein is DNA ligase.